We begin with the raw amino-acid sequence, 93 residues long: Alpha-defensin 22 (93 aa).

A signal peptide spans Met-1–Thr-19. Residues Asp-20 to Leu-58 constitute a propeptide that is removed on maturation. Residues Ile-22 to Ala-41 form a disordered region. Residues Thr-25–Gln-40 show a composition bias toward acidic residues. 3 disulfide bridges follow: Cys-64-Cys-89, Cys-66-Cys-81, and Cys-71-Cys-88.

It belongs to the alpha-defensin family.

It localises to the secreted. Its function is as follows. May have microbicidal activities. In Mus musculus (Mouse), this protein is Alpha-defensin 22 (Defa22).